A 530-amino-acid chain; its full sequence is MAALRRLLWPPPRVSPPLCAHQPLLGPWGRPAVTTLGLPGRPFSSREDEERAVAEAAWRRRRRWGELSVAAAAGGGLVGLVCYQLYGDPRAGSPATGRPSKSAATEPEDPPRGRGMLPIPVAAAKETVAIGRTDIEDLDLYATSRERRFRLFASIECEGQLFMTPYDFILAVTTDEPKVAKTWKSLSKQELNQMLAETPPVWKGSSKLFRNLKEKGVISYTEYLFLLCILTKPHAGFRIAFNMFDTDGNEMVDKKEFLVLQEIFRKKNEKREIKGDEEKRAMLRLQLYGYHSPTNSVLKTDAEELVSRSYWDTLRRNTSQALFSDLAERADDITSLVTDTTLLVHFFGKKGKAELNFEDFYRFMDNLQTEVLEIEFLSYSNGMNTISEEDFAHILLRYTNVENTSVFLENVRYSIPEEKGITFDEFRSFFQFLNNLEDFAIALNMYNFASRSIGQDEFKRAVYVATGLKFSPHLVNTVFKIFDVDKDDQLSYKEFIGIMKDRLHRGFRGYKTVQKYPTFKSCLKKELHSR.

The transit peptide at 1-43 (MAALRRLLWPPPRVSPPLCAHQPLLGPWGRPAVTTLGLPGRPF) directs the protein to the mitochondrion. Residues 92 to 115 (GSPATGRPSKSAATEPEDPPRGRG) form a disordered region. One can recognise an EF-hand 1 domain in the interval 232 to 267 (KPHAGFRIAFNMFDTDGNEMVDKKEFLVLQEIFRKK). 6 residues coordinate Ca(2+): Asp-245, Asp-247, Asn-249, Met-251, Asp-253, and Glu-256. Residues 401–436 (VENTSVFLENVRYSIPEEKGITFDEFRSFFQFLNNL) form the EF-hand 2; degenerate domain. The region spanning 470-505 (FSPHLVNTVFKIFDVDKDDQLSYKEFIGIMKDRLHR) is the EF-hand 3 domain. Positions 483, 485, 487, 489, and 494 each coordinate Ca(2+).

Belongs to the MICU1 family. MICU3 subfamily. As to quaternary structure, heterodimer; disulfide-linked; heterodimerizes with MICU1. Component of the uniplex complex, composed of MCU, EMRE/SMDT1, MICU1 and MICU3 in a 4:4:1:1 stoichiometry. In terms of tissue distribution, specifically expressed in the central nervous system and skeletal muscle.

The protein localises to the mitochondrion intermembrane space. It is found in the mitochondrion inner membrane. Functionally, tissue-specific calcium sensor of the mitochondrial calcium uniporter (MCU) channel, which specifically regulates MCU channel activity in the central nervous system and skeletal muscle. Senses calcium level via its EF-hand domains: compared to MICU1 and MICU2, MICU3 has a higher affinity for calcium. MICU1 and MICU3 form a disulfide-linked heterodimer that stimulates and inhibits MCU activity, depending on the concentration of calcium. At low calcium levels, MICU1 occludes the pore of the MCU channel, preventing mitochondrial calcium uptake. At higher calcium levels, calcium-binding to MICU1 and MICU3 induces a conformational change that weakens MCU-MICU1 interactions and moves the MICU1-MICU3 heterodimer away from the pore, allowing calcium permeation through the MCU channel. The high calcium affinity of MICU3 lowers the calcium threshold necessary for calcium permeation through the MCU channel. The MICU1-MICU3 heterodimer promotes flexibility of neurotransmission in neuronal cells by enhancing mitochondrial calcium uptake in presynapses. It is also required to increase mitochondrial calcium uptake in skeletal muscle cells, thereby increasing ATP production. The chain is Calcium uptake protein 3, mitochondrial from Homo sapiens (Human).